Here is a 249-residue protein sequence, read N- to C-terminus: MMAQSKANGSHYALTAIGLGMLVLGVIMAMWNLVPGFSPADKPTSQGNKTEGGGGILKSKTFSVAYVLVGAGMMLLLLAICLSIRDKRRMRQSEELARIQQQAGTVPHSQEEDSQEEEEDVSSRYYVPSYEEVMNTGYPETRGQEQNPRLSISLPSYESLTGLDEATPTSTRAETETSPGHAPDRQNSKLAKRLKPLKVRRIKSEKLHLKDFRITLPDKNVPPPSIEPLTPPPLYDEVQAKAPDARPPD.

A run of 2 helical transmembrane segments spans residues isoleucine 17–phenylalanine 37 and valine 64–isoleucine 84. Disordered stretches follow at residues glutamate 95–tyrosine 126, threonine 161–valine 199, and arginine 213–aspartate 249. Polar residues predominate over residues isoleucine 99–histidine 108. A phosphoserine mark is found at serine 109, serine 114, serine 178, and serine 188. The span at threonine 167–serine 178 shows a compositional bias: polar residues. The segment covering leucine 190–valine 199 has biased composition (basic residues). Over residues asparagine 220–leucine 234 the composition is skewed to pro residues.

Its subcellular location is the membrane. In Mus musculus (Mouse), this protein is Transmembrane protein 51 (Tmem51).